Reading from the N-terminus, the 150-residue chain is Cyclin-dependent kinases regulatory subunit (150 aa).

A compositionally biased stretch (low complexity) spans 115–137 (AAAQQQQQQQQQQQQQQQQHQTQ). Residues 115–150 (AAAQQQQQQQQQQQQQQQQHQTQSISNDMQVPPQIS) form a disordered region.

Belongs to the CKS family. In terms of assembly, forms a stable but non-covalent complex with the CDC28 protein and with a cyclin.

Functionally, binds to the catalytic subunit of the cyclin dependent kinase (CDC28) and is essential for its biological function. This chain is Cyclin-dependent kinases regulatory subunit, found in Saccharomyces cerevisiae (strain ATCC 204508 / S288c) (Baker's yeast).